The chain runs to 188 residues: Molybdopterin synthase catalytic subunit (188 aa).

Residues 1-14 (MATQPPQDQTSTTP) show a composition bias toward low complexity. The segment at 1-23 (MATQPPQDQTSTTPSLPPHLDPT) is disordered. Substrate is bound by residues 134–135 (HR), K150, and 157–159 (KRE).

Belongs to the MoaE family. MOCS2B subfamily. In terms of assembly, heterotetramer; composed of 2 small (MOCS2A) and 2 large (MOCS2B) subunits.

The protein resides in the cytoplasm. The enzyme catalyses 2 [molybdopterin-synthase sulfur-carrier protein]-C-terminal-Gly-aminoethanethioate + cyclic pyranopterin phosphate + H2O = molybdopterin + 2 [molybdopterin-synthase sulfur-carrier protein]-C-terminal Gly-Gly + 2 H(+). Its pathway is cofactor biosynthesis; molybdopterin biosynthesis. Its function is as follows. Catalytic subunit of the molybdopterin synthase complex, a complex that catalyzes the conversion of precursor Z into molybdopterin. Acts by mediating the incorporation of 2 sulfur atoms from thiocarboxylated MOCS2A into precursor Z to generate a dithiolene group. In Aspergillus fumigatus (strain ATCC MYA-4609 / CBS 101355 / FGSC A1100 / Af293) (Neosartorya fumigata), this protein is Molybdopterin synthase catalytic subunit.